The sequence spans 408 residues: Peptidase T-like protein RB0614 (408 aa).

His-80 lines the Zn(2+) pocket. Asp-82 is a catalytic residue. Residue Asp-142 participates in Zn(2+) binding. The active-site Proton acceptor is the Glu-174. Zn(2+) contacts are provided by Glu-175, Asp-198, and His-380.

The protein belongs to the peptidase M20B family. Zn(2+) serves as cofactor.

This chain is Peptidase T-like protein RB0614, found in Rhizobium meliloti (strain 1021) (Ensifer meliloti).